The chain runs to 230 residues: NADH-quinone oxidoreductase subunit 9 (230 aa).

4Fe-4S ferredoxin-type domains are found at residues 60 to 93 (GRPVLVEENGRPRCVACGLCARACPPLAISMQAK) and 104 to 133 (AWFEINMLRCIYCGYCEEVCPEEAIVMSKE). [4Fe-4S] cluster is bound by residues Cys-73, Cys-76, Cys-79, Cys-83, Cys-113, Cys-116, Cys-119, and Cys-123.

This sequence belongs to the complex I 23 kDa subunit family. As to quaternary structure, NDH-1 is composed of 14 different subunits. Subunits Nqo7-14 constitute the membrane sector of the complex. [4Fe-4S] cluster is required as a cofactor.

It localises to the cell inner membrane. It catalyses the reaction a quinone + NADH + 5 H(+)(in) = a quinol + NAD(+) + 4 H(+)(out). Its function is as follows. NDH-1 shuttles electrons from NADH, via FMN and iron-sulfur (Fe-S) centers, to quinones in the respiratory chain. The immediate electron acceptor for the enzyme in this species is believed to be menaquinone. Couples the redox reaction to proton translocation (for every two electrons transferred, four hydrogen ions are translocated across the cytoplasmic membrane), and thus conserves the redox energy in a proton gradient. This is NADH-quinone oxidoreductase subunit 9 (nqo9) from Rhodothermus marinus (Rhodothermus obamensis).